We begin with the raw amino-acid sequence, 155 residues long: Ribosome maturation factor RimP (155 aa).

This sequence belongs to the RimP family.

The protein localises to the cytoplasm. Required for maturation of 30S ribosomal subunits. The chain is Ribosome maturation factor RimP from Staphylococcus haemolyticus (strain JCSC1435).